The sequence spans 93 residues: Putative pterin-4-alpha-carbinolamine dehydratase (93 aa).

The protein belongs to the pterin-4-alpha-carbinolamine dehydratase family.

It catalyses the reaction (4aS,6R)-4a-hydroxy-L-erythro-5,6,7,8-tetrahydrobiopterin = (6R)-L-erythro-6,7-dihydrobiopterin + H2O. This chain is Putative pterin-4-alpha-carbinolamine dehydratase, found in Nostoc punctiforme (strain ATCC 29133 / PCC 73102).